Consider the following 118-residue polypeptide: Na(+)/H(+) antiporter subunit G1 (118 aa).

A run of 3 helical transmembrane segments spans residues 4 to 24 (IILI…SALA), 38 to 58 (AHAA…GTFL), and 60 to 80 (FIAT…FVLI).

Belongs to the CPA3 antiporters (TC 2.A.63) subunit G family. As to quaternary structure, may form a heterooligomeric complex that consists of seven subunits: mnhA1, mnhB1, mnhC1, mnhD1, mnhE1, mnhF1 and mnhG1.

The protein localises to the cell membrane. Functionally, mnh complex is a Na(+)/H(+) antiporter involved in Na(+) excretion. The polypeptide is Na(+)/H(+) antiporter subunit G1 (mnhG1) (Staphylococcus aureus (strain Mu3 / ATCC 700698)).